The sequence spans 198 residues: uncharacterized protein (198 aa).

The protein localises to the cytoplasm. This is an uncharacterized protein from Saccharomyces cerevisiae (strain ATCC 204508 / S288c) (Baker's yeast).